Reading from the N-terminus, the 167-residue chain is Endoribonuclease YbeY (167 aa).

Zn(2+) is bound by residues histidine 125, histidine 129, and histidine 135.

The protein belongs to the endoribonuclease YbeY family. Zn(2+) is required as a cofactor.

Its subcellular location is the cytoplasm. Single strand-specific metallo-endoribonuclease involved in late-stage 70S ribosome quality control and in maturation of the 3' terminus of the 16S rRNA. The protein is Endoribonuclease YbeY of Allorhizobium ampelinum (strain ATCC BAA-846 / DSM 112012 / S4) (Agrobacterium vitis (strain S4)).